Here is a 2609-residue protein sequence, read N- to C-terminus: Beige protein homolog 1 (2609 aa).

2 disordered regions span residues 1654 to 1679 (DSKLEARSSGARRNRSFDTSVEAPVS) and 1691 to 1729 (ILPSQEETLHDAARSDSNNSMEDEEDDVDEEDKEDKNRT). Positions 1711–1723 (MEDEEDDVDEEDK) are enriched in acidic residues. Positions 1735–1870 (ESGDSIQDVY…NRDSLYQKLV (136 aa)) constitute a BEACH-type PH domain. One can recognise a BEACH domain in the interval 1907 to 2202 (ANALSFSTTH…QVFKKPHPQR (296 aa)). WD repeat units lie at residues 2249–2290 (KDEV…QPVM), 2294–2332 (LHSEKITHVVACDERTFLTASLDLTLRLWTLSTNKPIKA), 2340–2379 (GHRYRITCVTVCKAFSIIVSGDAGGNLIIWDLNRAEFVSS), 2429–2475 (NSDE…NAKL), and 2507–2546 (ATRQNIITITPNGQARGIFAGDDKGQVFSWMLPDTTSNVH). The FYVE-type zinc-finger motif lies at 2550 to 2604 (DNTSELCSLCDSRFSLMEWRSQCRACGNSNVCSDCVSMLKDTNIKTCYECYRQMP).

It localises to the cytoplasm. Its subcellular location is the membrane. May be involved in protein sorting and cell wall formation. This chain is Beige protein homolog 1 (lvs1), found in Schizosaccharomyces pombe (strain 972 / ATCC 24843) (Fission yeast).